The chain runs to 223 residues: MKIAVVVFPGSNCDIDMYEAFHTVCKDDVEYVSYKEKSLDGFDVVVLPGGFSYGDYLRTGAIARFSNIIPAVENMAKEGKLVLGVCNGFQILTEMGLLPGALKKNDSLQFVCKTVTLEVENMHTPFTNEYADKEFIQIPIAHGDGSYYADENVLEELEDNHQVVFRYHGENPNGSLHDIAGICNKEGNVLGMMPHPERAVEEILGGIDGLPLFKSLLKAGVQA.

Positions 2 to 223 constitute a Glutamine amidotransferase type-1 domain; sequence KIAVVVFPGS…KSLLKAGVQA (222 aa). The active-site Nucleophile is Cys86. Catalysis depends on residues His195 and Glu197.

In terms of assembly, part of the FGAM synthase complex composed of 1 PurL, 1 PurQ and 2 PurS subunits.

It localises to the cytoplasm. The enzyme catalyses N(2)-formyl-N(1)-(5-phospho-beta-D-ribosyl)glycinamide + L-glutamine + ATP + H2O = 2-formamido-N(1)-(5-O-phospho-beta-D-ribosyl)acetamidine + L-glutamate + ADP + phosphate + H(+). It carries out the reaction L-glutamine + H2O = L-glutamate + NH4(+). It participates in purine metabolism; IMP biosynthesis via de novo pathway; 5-amino-1-(5-phospho-D-ribosyl)imidazole from N(2)-formyl-N(1)-(5-phospho-D-ribosyl)glycinamide: step 1/2. Functionally, part of the phosphoribosylformylglycinamidine synthase complex involved in the purines biosynthetic pathway. Catalyzes the ATP-dependent conversion of formylglycinamide ribonucleotide (FGAR) and glutamine to yield formylglycinamidine ribonucleotide (FGAM) and glutamate. The FGAM synthase complex is composed of three subunits. PurQ produces an ammonia molecule by converting glutamine to glutamate. PurL transfers the ammonia molecule to FGAR to form FGAM in an ATP-dependent manner. PurS interacts with PurQ and PurL and is thought to assist in the transfer of the ammonia molecule from PurQ to PurL. This is Phosphoribosylformylglycinamidine synthase subunit PurQ from Lactobacillus acidophilus (strain ATCC 700396 / NCK56 / N2 / NCFM).